The primary structure comprises 403 residues: Chalcone synthase 3 (403 aa).

C170 is an active-site residue.

It belongs to the thiolase-like superfamily. Chalcone/stilbene synthases family.

It carries out the reaction (E)-4-coumaroyl-CoA + 3 malonyl-CoA + 3 H(+) = 2',4,4',6'-tetrahydroxychalcone + 3 CO2 + 4 CoA. Its pathway is secondary metabolite biosynthesis; flavonoid biosynthesis. Functionally, the primary product of this enzyme is 4,2',4',6'-tetrahydroxychalcone (also termed naringenin-chalcone or chalcone) which can under specific conditions spontaneously isomerize into naringenin. The polypeptide is Chalcone synthase 3 (CHS3) (Gerbera hybrida (Daisy)).